The sequence spans 489 residues: Probable cytochrome P450 CYP44 (489 aa).

Residues 12–31 are disordered; sequence VEKCPYSPTSSPNTPPRTFS. Residues 16–29 show a composition bias toward low complexity; it reads PYSPTSSPNTPPRT. Cysteine 438 lines the heme pocket.

Belongs to the cytochrome P450 family. It depends on heme as a cofactor.

In terms of biological role, cytochromes P450 are a group of heme-thiolate monooxygenases. They oxidize a variety of structurally unrelated compounds, including steroids, fatty acids, and xenobiotics. This chain is Probable cytochrome P450 CYP44 (cyp-44A1), found in Caenorhabditis elegans.